The following is a 701-amino-acid chain: Elongation factor G (701 aa).

Positions 8-290 (SRYRNIGISA…AVIEYLPAPT (283 aa)) constitute a tr-type G domain. Residues 17 to 24 (AHIDAGKT), 88 to 92 (DTPGH), and 142 to 145 (NKMD) each bind GTP.

It belongs to the TRAFAC class translation factor GTPase superfamily. Classic translation factor GTPase family. EF-G/EF-2 subfamily.

Its subcellular location is the cytoplasm. In terms of biological role, catalyzes the GTP-dependent ribosomal translocation step during translation elongation. During this step, the ribosome changes from the pre-translocational (PRE) to the post-translocational (POST) state as the newly formed A-site-bound peptidyl-tRNA and P-site-bound deacylated tRNA move to the P and E sites, respectively. Catalyzes the coordinated movement of the two tRNA molecules, the mRNA and conformational changes in the ribosome. The sequence is that of Elongation factor G from Actinobacillus pleuropneumoniae serotype 5b (strain L20).